The following is a 508-amino-acid chain: Zinc finger CCCH-type with G patch domain-containing protein (508 aa).

A C3H1-type zinc finger spans residues 154 to 177 (PCNYYLEGECRFDETRCRYSHGAL). The tract at residues 253–279 (DDELSSDSEETNETDGSDAANESDMDD) is disordered. The G-patch domain occupies 309 to 355 (TRGIGSKLMASMGYIHGTGLGSDGRGIVTPVSAQILPQGRSLDACME). Residues 486 to 495 (QAQESSLSKE) are compositionally biased toward polar residues. The segment at 486 to 508 (QAQESSLSKEQQTRKSKNKMFEF) is disordered. The span at 499-508 (RKSKNKMFEF) shows a compositional bias: basic residues.

It is found in the nucleus. Functionally, transcription repressor. The chain is Zinc finger CCCH-type with G patch domain-containing protein from Drosophila virilis (Fruit fly).